Reading from the N-terminus, the 417-residue chain is MLAFKSDFLHIMSERGFIHQISDEKGLDALFSKEVVSAYIGFDPTASSLHAGSLLQIMMLHWLQKTGHRPIALMGGGTGLIGDPSFKDEARPLLTQDDIATNIVSIKKVFANYLTFGEKETDACIINNAEWLCKLNYLEFLRDVGKHFSINRMLSFDSVRLRLEREHSLSFLEFNYMILQAYDFVELYKRYGLRMQMGGSDQWGNIINGIELGHRLGTPQLYAFTSPLLTTSSGAKMGKSLNGAVWLNADMLSPYQFWQYWRNTEDADVTRFLKLYTTLPMDEILKLSALQGTEINEAKKILATEITAMLHGRDLANTAAKTARKTFEEKTFGENLPTIEINASDLKTGAGLLALLVQAGLAKSNSEARRHIQGGGIRVNDQIIEDETCLILEEDINAQGIIKLSFGKKKHVLIKPL.

An L-tyrosine-binding site is contributed by tyrosine 39. Positions 44–53 (PTASSLHAGS) match the 'HIGH' region motif. Residues tyrosine 176 and glutamine 180 each contribute to the L-tyrosine site. The 'KMSKS' region motif lies at 236–240 (KMGKS). Lysine 239 provides a ligand contact to ATP. Positions 350 to 417 (AGLLALLVQA…KKKHVLIKPL (68 aa)) constitute an S4 RNA-binding domain.

Belongs to the class-I aminoacyl-tRNA synthetase family. TyrS type 1 subfamily. In terms of assembly, homodimer.

It is found in the cytoplasm. It carries out the reaction tRNA(Tyr) + L-tyrosine + ATP = L-tyrosyl-tRNA(Tyr) + AMP + diphosphate + H(+). In terms of biological role, catalyzes the attachment of tyrosine to tRNA(Tyr) in a two-step reaction: tyrosine is first activated by ATP to form Tyr-AMP and then transferred to the acceptor end of tRNA(Tyr). The protein is Tyrosine--tRNA ligase of Bartonella quintana (strain Toulouse) (Rochalimaea quintana).